The primary structure comprises 239 residues: Ribosomal RNA small subunit methyltransferase G (239 aa).

Residues G77, F82, A128–E129, and R147 each bind S-adenosyl-L-methionine.

It belongs to the methyltransferase superfamily. RNA methyltransferase RsmG family.

It is found in the cytoplasm. Specifically methylates the N7 position of guanine in position 535 of 16S rRNA. This chain is Ribosomal RNA small subunit methyltransferase G, found in Bacillus cereus (strain G9842).